A 202-amino-acid chain; its full sequence is ATP-dependent Clp protease proteolytic subunit (202 aa).

S98 serves as the catalytic Nucleophile. The active site involves H123.

It belongs to the peptidase S14 family. As to quaternary structure, fourteen ClpP subunits assemble into 2 heptameric rings which stack back to back to give a disk-like structure with a central cavity, resembling the structure of eukaryotic proteasomes.

The protein localises to the cytoplasm. The catalysed reaction is Hydrolysis of proteins to small peptides in the presence of ATP and magnesium. alpha-casein is the usual test substrate. In the absence of ATP, only oligopeptides shorter than five residues are hydrolyzed (such as succinyl-Leu-Tyr-|-NHMec, and Leu-Tyr-Leu-|-Tyr-Trp, in which cleavage of the -Tyr-|-Leu- and -Tyr-|-Trp bonds also occurs).. Functionally, cleaves peptides in various proteins in a process that requires ATP hydrolysis. Has a chymotrypsin-like activity. Plays a major role in the degradation of misfolded proteins. This Desulfovibrio desulfuricans (strain ATCC 27774 / DSM 6949 / MB) protein is ATP-dependent Clp protease proteolytic subunit.